The chain runs to 253 residues: Imidazole glycerol phosphate synthase subunit HisF (253 aa).

Active-site residues include aspartate 11 and aspartate 130.

It belongs to the HisA/HisF family. As to quaternary structure, heterodimer of HisH and HisF.

It is found in the cytoplasm. The catalysed reaction is 5-[(5-phospho-1-deoxy-D-ribulos-1-ylimino)methylamino]-1-(5-phospho-beta-D-ribosyl)imidazole-4-carboxamide + L-glutamine = D-erythro-1-(imidazol-4-yl)glycerol 3-phosphate + 5-amino-1-(5-phospho-beta-D-ribosyl)imidazole-4-carboxamide + L-glutamate + H(+). The protein operates within amino-acid biosynthesis; L-histidine biosynthesis; L-histidine from 5-phospho-alpha-D-ribose 1-diphosphate: step 5/9. IGPS catalyzes the conversion of PRFAR and glutamine to IGP, AICAR and glutamate. The HisF subunit catalyzes the cyclization activity that produces IGP and AICAR from PRFAR using the ammonia provided by the HisH subunit. The chain is Imidazole glycerol phosphate synthase subunit HisF from Clostridium botulinum (strain Langeland / NCTC 10281 / Type F).